Consider the following 446-residue polypeptide: Adenylosuccinate synthetase (446 aa).

GTP-binding positions include 12 to 18 (GDEGKGK) and 40 to 42 (GHT). Aspartate 13 functions as the Proton acceptor in the catalytic mechanism. Mg(2+) is bound by residues aspartate 13 and glycine 40. Residues 13-16 (DEGK), 38-41 (NAGH), threonine 128, arginine 142, glutamine 223, threonine 238, and arginine 302 contribute to the IMP site. Histidine 41 acts as the Proton donor in catalysis. 298–304 (TTTGRRR) contacts substrate. GTP-binding positions include arginine 304, 330–332 (KLD), and 412–414 (SLG).

It belongs to the adenylosuccinate synthetase family. In terms of assembly, homodimer. Requires Mg(2+) as cofactor.

Its subcellular location is the cytoplasm. The catalysed reaction is IMP + L-aspartate + GTP = N(6)-(1,2-dicarboxyethyl)-AMP + GDP + phosphate + 2 H(+). The protein operates within purine metabolism; AMP biosynthesis via de novo pathway; AMP from IMP: step 1/2. In terms of biological role, plays an important role in the de novo pathway of purine nucleotide biosynthesis. Catalyzes the first committed step in the biosynthesis of AMP from IMP. This Crocosphaera subtropica (strain ATCC 51142 / BH68) (Cyanothece sp. (strain ATCC 51142)) protein is Adenylosuccinate synthetase.